The following is a 419-amino-acid chain: L-rhamnose isomerase (419 aa).

Mn(2+) contacts are provided by His-262, Asp-294, and Asp-296.

It belongs to the rhamnose isomerase family. Homotetramer. It depends on Mn(2+) as a cofactor.

The protein localises to the cytoplasm. The catalysed reaction is L-rhamnopyranose = L-rhamnulose. The protein operates within carbohydrate degradation; L-rhamnose degradation; glycerone phosphate from L-rhamnose: step 1/3. Functionally, catalyzes the interconversion of L-rhamnose and L-rhamnulose. This Salmonella agona (strain SL483) protein is L-rhamnose isomerase.